A 92-amino-acid polypeptide reads, in one-letter code: MKPRATSSHGYKAQGNKALNGALTSKKKVSKNQVVFFDYRDERKLKRFINDQGKIIPRRITGLSAKEQNLLTHSVKWARFLAVIPYVVDEYK.

This sequence belongs to the bacterial ribosomal protein bS18 family. As to quaternary structure, part of the 30S ribosomal subunit. Forms a tight heterodimer with protein bS6.

Functionally, binds as a heterodimer with protein bS6 to the central domain of the 16S rRNA, where it helps stabilize the platform of the 30S subunit. The chain is Small ribosomal subunit protein bS18 from Chlorobium chlorochromatii (strain CaD3).